Consider the following 493-residue polypeptide: Inosine-5'-monophosphate dehydrogenase (493 aa).

CBS domains follow at residues 97 to 155 (VIID…NAPI) and 159 to 219 (MTSE…AKDE). Residues D253 and 303-305 (GIG) each bind NAD(+). Positions 305 and 307 each coordinate K(+). Position 308 (S308) interacts with IMP. A K(+)-binding site is contributed by C310. C310 (thioimidate intermediate) is an active-site residue. Residues 343 to 345 (DGG), 366 to 367 (GS), and 390 to 394 (YRGMG) contribute to the IMP site. Catalysis depends on R406, which acts as the Proton acceptor. E421 contributes to the IMP binding site. E475, S476, and H477 together coordinate K(+).

This sequence belongs to the IMPDH/GMPR family. In terms of assembly, homotetramer. K(+) is required as a cofactor.

The enzyme catalyses IMP + NAD(+) + H2O = XMP + NADH + H(+). It participates in purine metabolism; XMP biosynthesis via de novo pathway; XMP from IMP: step 1/1. Mycophenolic acid (MPA) is a non-competitive inhibitor that prevents formation of the closed enzyme conformation by binding to the same site as the amobile flap. In contrast, mizoribine monophosphate (MZP) is a competitive inhibitor that induces the closed conformation. MPA is a potent inhibitor of mammalian IMPDHs but a poor inhibitor of the bacterial enzymes. MZP is a more potent inhibitor of bacterial IMPDH. Its function is as follows. Catalyzes the conversion of inosine 5'-phosphate (IMP) to xanthosine 5'-phosphate (XMP), the first committed and rate-limiting step in the de novo synthesis of guanine nucleotides, and therefore plays an important role in the regulation of cell growth. The polypeptide is Inosine-5'-monophosphate dehydrogenase (Streptococcus pyogenes serotype M3 (strain ATCC BAA-595 / MGAS315)).